A 168-amino-acid polypeptide reads, in one-letter code: MPRSRINGNFIDKTFSIVANILLRIIPTTSGEKEAFTYYRDGMSAQSEGNYAEALQNYYEATRLEIDPYDRSYILYNIGLIHTSNGEHTKALEYYFRALERNPFLPQAFNNMAVICHYRGEQAIRQGDSEIAEAWSDQAAEYWKQAIALTPGNYIEAHNWLKITRRFE.

TPR repeat units follow at residues 35–68 (AFTY…EIDP), 72–105 (SYIL…NPFL), and 120–153 (GEQA…TPGN).

This sequence belongs to the Ycf3 family.

It is found in the plastid. It localises to the chloroplast thylakoid membrane. Functionally, essential for the assembly of the photosystem I (PSI) complex. May act as a chaperone-like factor to guide the assembly of the PSI subunits. This is Photosystem I assembly protein Ycf3 from Ranunculus macranthus (Large buttercup).